Consider the following 785-residue polypeptide: uncharacterized protein (785 aa).

The span at 53-65 (KNTLTGSHGSNDL) shows a compositional bias: polar residues. The disordered stretch occupies residues 53–162 (KNTLTGSHGS…RKAADEQGPI (110 aa)). The segment covering 66 to 79 (ATDESLDSPEDEEA) has biased composition (acidic residues). Over residues 81–94 (SPLQLGTPTSTTSG) the composition is skewed to polar residues. A Phosphoserine modification is found at Ser-215. Disordered regions lie at residues 571–590 (KVVD…TSVN) and 631–657 (DSSG…RIQF). Over residues 575-584 (SDDEESDSDE) the composition is skewed to acidic residues. A Phosphoserine modification is found at Ser-667. The tract at residues 693–785 (DPKMKFTSHP…FGSIFKKVFG (93 aa)) is disordered. The span at 725-739 (RKAHHHHHHHNHVSR) shows a compositional bias: basic residues. The span at 776–785 (FGSIFKKVFG) shows a compositional bias: low complexity.

This is an uncharacterized protein from Saccharomyces cerevisiae (strain ATCC 204508 / S288c) (Baker's yeast).